Consider the following 513-residue polypeptide: Histidine ammonia-lyase (513 aa).

Positions 146–148 form a cross-link, 5-imidazolinone (Ala-Gly); it reads ASG. Serine 147 is subject to 2,3-didehydroalanine (Ser).

The protein belongs to the PAL/histidase family. In terms of processing, contains an active site 4-methylidene-imidazol-5-one (MIO), which is formed autocatalytically by cyclization and dehydration of residues Ala-Ser-Gly.

It localises to the cytoplasm. The enzyme catalyses L-histidine = trans-urocanate + NH4(+). Its pathway is amino-acid degradation; L-histidine degradation into L-glutamate; N-formimidoyl-L-glutamate from L-histidine: step 1/3. The polypeptide is Histidine ammonia-lyase (Shewanella oneidensis (strain ATCC 700550 / JCM 31522 / CIP 106686 / LMG 19005 / NCIMB 14063 / MR-1)).